A 75-amino-acid polypeptide reads, in one-letter code: Exodeoxyribonuclease 7 small subunit (75 aa).

The protein belongs to the XseB family. In terms of assembly, heterooligomer composed of large and small subunits.

It is found in the cytoplasm. The catalysed reaction is Exonucleolytic cleavage in either 5'- to 3'- or 3'- to 5'-direction to yield nucleoside 5'-phosphates.. Functionally, bidirectionally degrades single-stranded DNA into large acid-insoluble oligonucleotides, which are then degraded further into small acid-soluble oligonucleotides. The chain is Exodeoxyribonuclease 7 small subunit from Thermotoga maritima (strain ATCC 43589 / DSM 3109 / JCM 10099 / NBRC 100826 / MSB8).